Reading from the N-terminus, the 471-residue chain is 3-isopropylmalate dehydratase large subunit (471 aa).

[4Fe-4S] cluster contacts are provided by cysteine 347, cysteine 407, and cysteine 410.

The protein belongs to the aconitase/IPM isomerase family. LeuC type 1 subfamily. As to quaternary structure, heterodimer of LeuC and LeuD. [4Fe-4S] cluster serves as cofactor.

It carries out the reaction (2R,3S)-3-isopropylmalate = (2S)-2-isopropylmalate. The protein operates within amino-acid biosynthesis; L-leucine biosynthesis; L-leucine from 3-methyl-2-oxobutanoate: step 2/4. Catalyzes the isomerization between 2-isopropylmalate and 3-isopropylmalate, via the formation of 2-isopropylmaleate. This Geobacillus kaustophilus (strain HTA426) protein is 3-isopropylmalate dehydratase large subunit.